Here is a 335-residue protein sequence, read N- to C-terminus: Probable cytosolic iron-sulfur protein assembly protein Ciao1 (335 aa).

WD repeat units follow at residues 12 to 51, 57 to 96, 101 to 140, 146 to 185, 192 to 231, 250 to 289, and 301 to 335; these read GHKG…WSTK, GHKR…FECN, GHEN…EFEC, PHTQ…NDWD, SHTS…NTAG, QHSR…KPDE, and AHDQ…KVTE.

It belongs to the WD repeat CIA1 family. In terms of processing, conjugated to URM1, a ubiquitin-like protein.

Its function is as follows. Essential component of the cytosolic iron-sulfur (Fe/S) protein assembly machinery. Required for the maturation of extramitochondrial Fe/S proteins. In Drosophila melanogaster (Fruit fly), this protein is Probable cytosolic iron-sulfur protein assembly protein Ciao1.